Reading from the N-terminus, the 393-residue chain is Phosphoglycerate kinase (393 aa).

Residues 22 to 24 (DFN), arginine 37, 60 to 63 (HLGR), arginine 119, and arginine 152 each bind substrate. Residues lysine 202, glycine 293, glutamate 324, and 350–353 (GGDS) each bind ATP.

The protein belongs to the phosphoglycerate kinase family. As to quaternary structure, monomer.

Its subcellular location is the cytoplasm. It carries out the reaction (2R)-3-phosphoglycerate + ATP = (2R)-3-phospho-glyceroyl phosphate + ADP. The protein operates within carbohydrate degradation; glycolysis; pyruvate from D-glyceraldehyde 3-phosphate: step 2/5. The protein is Phosphoglycerate kinase of Borrelia garinii subsp. bavariensis (strain ATCC BAA-2496 / DSM 23469 / PBi) (Borreliella bavariensis).